Consider the following 212-residue polypeptide: Large ribosomal subunit protein uL3 (212 aa).

Gln-152 bears the N5-methylglutamine mark.

The protein belongs to the universal ribosomal protein uL3 family. Part of the 50S ribosomal subunit. Forms a cluster with proteins L14 and L19. In terms of processing, methylated by PrmB.

Functionally, one of the primary rRNA binding proteins, it binds directly near the 3'-end of the 23S rRNA, where it nucleates assembly of the 50S subunit. This chain is Large ribosomal subunit protein uL3, found in Marinomonas sp. (strain MWYL1).